We begin with the raw amino-acid sequence, 298 residues long: Probable endonuclease 4 (298 aa).

Residues His-69, His-111, Glu-146, Asp-180, His-183, His-215, Asp-228, His-230, and Glu-260 each coordinate Zn(2+).

This sequence belongs to the AP endonuclease 2 family. Zn(2+) is required as a cofactor.

It catalyses the reaction Endonucleolytic cleavage to 5'-phosphooligonucleotide end-products.. In terms of biological role, endonuclease IV plays a role in DNA repair. It cleaves phosphodiester bonds at apurinic or apyrimidinic (AP) sites, generating a 3'-hydroxyl group and a 5'-terminal sugar phosphate. The sequence is that of Probable endonuclease 4 from Bacillus mycoides (strain KBAB4) (Bacillus weihenstephanensis).